We begin with the raw amino-acid sequence, 671 residues long: Protein cereblon (671 aa).

A compositionally biased stretch (acidic residues) spans methionine 1–glutamate 11. 3 disordered regions span residues methionine 1–aspartate 59, leucine 104–proline 130, and glycine 150–alanine 187. 2 stretches are compositionally biased toward low complexity: residues glutamine 39–glutamate 51 and threonine 105–proline 115. Over residues serine 162–serine 173 the composition is skewed to polar residues. In terms of domain architecture, Lon N-terminal spans arginine 309–serine 537. The region spanning glutamate 536–lysine 645 is the CULT domain. Zn(2+)-binding residues include cysteine 541, cysteine 544, cysteine 610, and cysteine 613.

It belongs to the CRBN family. In terms of assembly, likely a component of a DCX (DDB1-CUL4-X-box) protein ligase complex. May interact with pic/DDB1. Ubiquitinated.

It localises to the nucleus. It participates in protein modification; protein ubiquitination. Its function is as follows. Substrate recognition component of a DCX (DDB1-CUL4-X-box) E3 protein ligase complex that mediates the ubiquitination and subsequent proteasomal degradation of target proteins. Has an essential role in mediating growth by negatively regulating insulin signaling. It also has a role in maintaining presynaptic function in the neuromuscular junction synapses of third-instar larvae. The polypeptide is Protein cereblon (Drosophila grimshawi (Hawaiian fruit fly)).